Here is a 126-residue protein sequence, read N- to C-terminus: Hydrogenase maturation factor HypA (126 aa).

Residue H2 coordinates Ni(2+). Positions 78, 81, 97, and 100 each coordinate Zn(2+).

The protein belongs to the HypA/HybF family.

Functionally, involved in the maturation of [NiFe] hydrogenases. Required for nickel insertion into the metal center of the hydrogenase. The chain is Hydrogenase maturation factor HypA from Methanococcus maripaludis (strain C7 / ATCC BAA-1331).